A 299-amino-acid chain; its full sequence is Recombination-associated protein RdgC (299 aa).

It belongs to the RdgC family.

Its subcellular location is the cytoplasm. The protein resides in the nucleoid. May be involved in recombination. This Neisseria meningitidis serogroup C (strain 053442) protein is Recombination-associated protein RdgC.